Reading from the N-terminus, the 255-residue chain is Pre-miRNA 5'-monophosphate methyltransferase (255 aa).

S-adenosyl-L-methionine contacts are provided by residues Arg32, Asn66, Asp96, 121–122 (DI), and Met150. The Bin3-type SAM domain occupies 41 to 253 (LHKLFRKPAE…SLLLFKIQRH (213 aa)).

It belongs to the methyltransferase superfamily.

The protein localises to the cytoplasm. The catalysed reaction is a 5'-end 5'-phospho-ribonucleoside-RNA + S-adenosyl-L-methionine = a 5'-end (5'-methylphospho)-ribonucleoside-RNA + S-adenosyl-L-homocysteine. The enzyme catalyses a 5'-end 5'-phospho-ribonucleoside-RNA + 2 S-adenosyl-L-methionine = a 5'-end (5'-bismethylphospho)-ribonucleoside-RNA + 2 S-adenosyl-L-homocysteine. O-methyltransferase that specifically monomethylates 5'-monophosphate of cytoplasmic histidyl tRNA (tRNA(His)), acting as a capping enzyme by protecting tRNA(His) from cleavage by DICER1. Also able, with less efficiently, to methylate the 5' monophosphate of a subset of pre-miRNAs, acting as a negative regulator of miRNA processing. The 5' monophosphate of pre-miRNAs is recognized by DICER1 and is required for pre-miRNAs processing: methylation at this position reduces the processing of pre-miRNAs by DICER1. Was also reported to mediate dimethylation of pre-miR-145; however dimethylation cannot be reproduced by another group which observes a monomethylation of pre-miR-145. This is Pre-miRNA 5'-monophosphate methyltransferase (bcdin3d) from Xenopus laevis (African clawed frog).